A 64-amino-acid chain; its full sequence is Large ribosomal subunit protein uL29 (64 aa).

The protein belongs to the universal ribosomal protein uL29 family.

The protein is Large ribosomal subunit protein uL29 of Paraburkholderia phytofirmans (strain DSM 17436 / LMG 22146 / PsJN) (Burkholderia phytofirmans).